Consider the following 490-residue polypeptide: Betaine aldehyde dehydrogenase (490 aa).

K(+)-binding residues include T26 and D93. 150–152 (GAW) serves as a coordination point for NAD(+). K162 acts as the Charge relay system in catalysis. 176 to 179 (KPSE) lines the NAD(+) pocket. V180 contacts K(+). 230-233 (GVAT) is a binding site for NAD(+). L246 is a binding site for K(+). The active-site Proton acceptor is E252. The NAD(+) site is built by G254, C286, and E387. C286 functions as the Nucleophile in the catalytic mechanism. C286 is subject to Cysteine sulfenic acid (-SOH). 2 residues coordinate K(+): K457 and G460. Catalysis depends on E464, which acts as the Charge relay system.

The protein belongs to the aldehyde dehydrogenase family. As to quaternary structure, dimer of dimers. K(+) is required as a cofactor.

The catalysed reaction is betaine aldehyde + NAD(+) + H2O = glycine betaine + NADH + 2 H(+). The protein operates within amine and polyamine biosynthesis; betaine biosynthesis via choline pathway; betaine from betaine aldehyde: step 1/1. In terms of biological role, involved in the biosynthesis of the osmoprotectant glycine betaine. Catalyzes the irreversible oxidation of betaine aldehyde to the corresponding acid. The chain is Betaine aldehyde dehydrogenase from Stenotrophomonas maltophilia (strain K279a).